Consider the following 305-residue polypeptide: 2-methoxy-6-polyprenyl-1,4-benzoquinol methylase, mitochondrial (305 aa).

The N-terminal 34 residues, 1–34 (MSRLRAPVAKFLADGLKGIRSTALAGSRLSNCRY), are a transit peptide targeting the mitochondrion. S-adenosyl-L-methionine contacts are provided by residues Thr-117, Asp-143, and 173–174 (NA).

Belongs to the class I-like SAM-binding methyltransferase superfamily. MenG/UbiE family. Component of a multi-subunit COQ enzyme complex, composed of at least COQ3, COQ4, COQ5, COQ6, COQ7 and COQ9.

It is found in the mitochondrion inner membrane. The catalysed reaction is 2-methoxy-6-(all-trans-decaprenyl)benzene-1,4-diol + S-adenosyl-L-methionine = 5-methoxy-2-methyl-3-(all-trans-decaprenyl)benzene-1,4-diol + S-adenosyl-L-homocysteine + H(+). The protein operates within cofactor biosynthesis; ubiquinone biosynthesis. Functionally, methyltransferase required for the conversion of 2-decaprenyl-6-methoxy-1,4-benzoquinol (DDMQH2) to 2-decaprenyl-3-methyl-6-methoxy-1,4-benzoquinol (DMQH2). The protein is 2-methoxy-6-polyprenyl-1,4-benzoquinol methylase, mitochondrial of Schizosaccharomyces pombe (strain 972 / ATCC 24843) (Fission yeast).